We begin with the raw amino-acid sequence, 136 residues long: Small ribosomal subunit protein uS8 (136 aa).

The protein belongs to the universal ribosomal protein uS8 family. As to quaternary structure, part of the 30S ribosomal subunit. Contacts proteins S5 and S12.

In terms of biological role, one of the primary rRNA binding proteins, it binds directly to 16S rRNA central domain where it helps coordinate assembly of the platform of the 30S subunit. The polypeptide is Small ribosomal subunit protein uS8 (Sulfurihydrogenibium sp. (strain YO3AOP1)).